The following is a 533-amino-acid chain: Protein translocase subunit SecD (533 aa).

Transmembrane regions (helical) follow at residues 8–28 (ALLV…TFVS), 377–397 (IVGG…GGVV), 400–420 (LALA…GFTL), 422–442 (LPGI…NVLI), 469–489 (LTIL…LQFG), and 495–515 (GFAV…IFVT).

Belongs to the SecD/SecF family. SecD subfamily. Forms a complex with SecF. Part of the essential Sec protein translocation apparatus which comprises SecA, SecYEG and auxiliary proteins SecDF-YajC and YidC.

Its subcellular location is the cell inner membrane. Its function is as follows. Part of the Sec protein translocase complex. Interacts with the SecYEG preprotein conducting channel. SecDF uses the proton motive force (PMF) to complete protein translocation after the ATP-dependent function of SecA. The sequence is that of Protein translocase subunit SecD from Syntrophobacter fumaroxidans (strain DSM 10017 / MPOB).